Here is a 315-residue protein sequence, read N- to C-terminus: Methionyl-tRNA formyltransferase (315 aa).

Position 113 to 116 (113 to 116) interacts with (6S)-5,6,7,8-tetrahydrofolate; that stretch reads SLLP.

The protein belongs to the Fmt family.

The catalysed reaction is L-methionyl-tRNA(fMet) + (6R)-10-formyltetrahydrofolate = N-formyl-L-methionyl-tRNA(fMet) + (6S)-5,6,7,8-tetrahydrofolate + H(+). Its function is as follows. Attaches a formyl group to the free amino group of methionyl-tRNA(fMet). The formyl group appears to play a dual role in the initiator identity of N-formylmethionyl-tRNA by promoting its recognition by IF2 and preventing the misappropriation of this tRNA by the elongation apparatus. The polypeptide is Methionyl-tRNA formyltransferase (Cronobacter sakazakii (strain ATCC BAA-894) (Enterobacter sakazakii)).